The chain runs to 1902 residues: Plexin-B3 (1902 aa).

A signal peptide spans 1 to 34; the sequence is MLTDFLQAPVMAPWSPFSLHLLLLFLLLLPLTRA. One can recognise a Sema domain in the interval 35–461; sequence HRFSVPNASF…TAQQVDRILV (427 aa). Residues 35–1245 lie on the Extracellular side of the membrane; the sequence is HRFSVPNASF…MISTFPVEAQ (1211 aa). A glycan (N-linked (GlcNAc...) asparagine) is linked at Asn-41. 2 disulfide bridges follow: Cys-88–Cys-97 and Cys-122–Cys-130. Asn-221 carries N-linked (GlcNAc...) asparagine glycosylation. 3 disulfide bridges follow: Cys-257/Cys-360, Cys-273/Cys-305, and Cys-323/Cys-347. The disordered stretch occupies residues 353-372; the sequence is DSPESYPCGDEHTPSPIAGR. N-linked (GlcNAc...) asparagine glycans are attached at residues Asn-416 and Asn-469. Residues 463–515 form the PSI 1 domain; the sequence is ACPQFPNCTTCLQARDPLCGWCILQGRCTRRAECGRAVQPNQWLWSYEDNHCL. 5 cysteine pairs are disulfide-bonded: Cys-464–Cys-481, Cys-470–Cys-514, Cys-473–Cys-490, Cys-484–Cys-496, and Cys-551–Cys-569. PSI domains are found at residues 609 to 671 and 776 to 822; these read DCSA…EACP and DCAM…QLCP. N-linked (GlcNAc...) asparagine glycans are attached at residues Asn-791, Asn-889, Asn-946, Asn-1090, and Asn-1207. IPT/TIG domains follow at residues 824–913, 915–1001, and 1003–1134; these read PSID…HFTY, DPVL…FRYT, and NPQL…FLYQ. Residues 1246 to 1266 traverse the membrane as a helical segment; sequence VGLGMGAAMLIAAVLLLTLMY. Topologically, residues 1267–1902 are cytoplasmic; sequence RHKSKQALRD…ALVEYKVTDL (636 aa).

It belongs to the plexin family. As to quaternary structure, binds MET and MST1R. Interacts with RIT2/RIN. Interacts (via cytoplasmic domain) with FSCN1 and RAC1. May form homodimers (via Sema domain). Interacts (via cytoplasmic domain) with ARHGDIA. Expressed in glioma cells (at protein level). Expressed in glioma cells and oligodendrocyte precursor cells.

Its subcellular location is the cell membrane. Receptor for SEMA5A that plays a role in axon guidance, invasive growth and cell migration. Stimulates neurite outgrowth and mediates Ca(2+)/Mg(2+)-dependent cell aggregation. In glioma cells, SEMA5A stimulation of PLXNB3 results in the disassembly of F-actin stress fibers, disruption of focal adhesions and cellular collapse as well as inhibition of cell migration and invasion through ARHGDIA-mediated inactivation of RAC1. The sequence is that of Plexin-B3 (Plxnb3) from Rattus norvegicus (Rat).